The chain runs to 356 residues: MGPASEVYGRKLPFFLGYVLFVLSQIPVALGHDAPTVLVFRFLGGVTSSVCPAITGGWLADFLLPAERGVAVAIFAATTLVGPSIGAITSQVQLQTAMGWRMTAWTTMILGIVSGVAGFIILPETYLPVVEQRHARKLRQETKDWALHSRLDEKPVSIREFLTKYLTLPISMLVSEPILLSMTIYISFTFGLIYLLFVAYPVSFVQERGYGAIDGTLPLLSICAGIIVGAFYASWSTLTTVKQKAASGNALVPEDRLHPMIVGAVSLAIGLLWFAWTSSPAISPWPQILAGIPIGVGVQVILLQSLAYLIDIYTTGAASAISGTMIVRSLVGGTFPLFAPQMYRKFGVSIAVLIIQ.

Helical transmembrane passes span 12-32 (LPFF…ALGH), 42-62 (FLGG…LADF), 69-89 (GVAV…GAIT), 102-122 (MTAW…FIIL), 178-198 (ILLS…LLFV), 211-231 (GAID…VGAF), 257-277 (LHPM…FAWT), 288-308 (ILAG…SLAY), and 320-340 (AISG…LFAP).

The protein belongs to the major facilitator superfamily. CAR1 family.

It is found in the membrane. MFS-type transporter; part of the gene cluster that mediates the biosynthesis of azaterrilone A and other azaphilones, a class of fungal metabolites characterized by a highly oxygenated pyrano-quinone bicyclic core and exhibiting a broad range of bioactivities. The polypeptide is MFS-type transporter tazK (Aspergillus terreus (strain NIH 2624 / FGSC A1156)).